The following is a 165-amino-acid chain: Putative defense protein Hdd11 (165 aa).

The first 17 residues, 1 to 17 (MWATYVFIAVSLACANG), serve as a signal peptide directing secretion. Positions 18–165 (YSSGAPESVC…VESGPVKVIS (148 aa)) constitute a Reelin domain. A disulfide bridge links Cys27 with Cys104.

This sequence belongs to the insect defense protein family.

It localises to the secreted. In terms of biological role, as this protein is expressed upon bacterial infection, it may have antimicrobial activity. In Hyphantria cunea (Fall webworm moth), this protein is Putative defense protein Hdd11.